A 288-amino-acid polypeptide reads, in one-letter code: Acetyl-coenzyme A carboxylase carboxyl transferase subunit beta (288 aa).

The CoA carboxyltransferase N-terminal domain occupies 34–288 (LWVKCSRCNE…ANILSLHGTN (255 aa)). Zn(2+)-binding residues include cysteine 38, cysteine 41, cysteine 57, and cysteine 60. The C4-type zinc-finger motif lies at 38-60 (CSRCNEILYTKELDKNFKVCHKC).

It belongs to the AccD/PCCB family. Acetyl-CoA carboxylase is a heterohexamer composed of biotin carboxyl carrier protein (AccB), biotin carboxylase (AccC) and two subunits each of ACCase subunit alpha (AccA) and ACCase subunit beta (AccD). It depends on Zn(2+) as a cofactor.

The protein resides in the cytoplasm. It carries out the reaction N(6)-carboxybiotinyl-L-lysyl-[protein] + acetyl-CoA = N(6)-biotinyl-L-lysyl-[protein] + malonyl-CoA. It participates in lipid metabolism; malonyl-CoA biosynthesis; malonyl-CoA from acetyl-CoA: step 1/1. Its function is as follows. Component of the acetyl coenzyme A carboxylase (ACC) complex. Biotin carboxylase (BC) catalyzes the carboxylation of biotin on its carrier protein (BCCP) and then the CO(2) group is transferred by the transcarboxylase to acetyl-CoA to form malonyl-CoA. In Desulforamulus reducens (strain ATCC BAA-1160 / DSM 100696 / MI-1) (Desulfotomaculum reducens), this protein is Acetyl-coenzyme A carboxylase carboxyl transferase subunit beta.